Consider the following 370-residue polypeptide: Cysteine-type anaerobic sulfatase-maturating enzyme (370 aa).

In terms of domain architecture, Radical SAM core spans 1 to 227 (MPPLSLLIKP…LKNLFDFWYE (227 aa)). [4Fe-4S] cluster is bound by residues C15 and C19. Y21 contacts S-adenosyl-L-methionine. Position 22 (C22) interacts with [4Fe-4S] cluster. S-adenosyl-L-methionine contacts are provided by G66, S122, R134, and L195. Residues C255, C261, and C276 each contribute to the [4Fe-4S] cluster site. D277 functions as the Proton acceptor in the catalytic mechanism. [4Fe-4S] cluster contacts are provided by C317, C320, C326, C330, and C348.

The protein belongs to the radical SAM superfamily. Anaerobic sulfatase-maturating enzyme family. As to quaternary structure, monomer. It depends on [4Fe-4S] cluster as a cofactor.

The catalysed reaction is L-cysteinyl-[sulfatase] + S-adenosyl-L-methionine + H2O = 3-oxo-L-alanyl-[sulfatase] + hydrogen sulfide + 5'-deoxyadenosine + L-methionine + 2 H(+). It functions in the pathway protein modification; sulfatase oxidation. In terms of biological role, involved in 'Cys-type' sulfatase maturation under anaerobic conditions. Catalyzes the post-translational modification of cysteine ('Cys-51' in the arylsulfatase CPF_0221) into 3-oxoalanine (also known as C(alpha)-formylglycine (FGly)), by a free radical chemical mechanism initiated via the reductive cleavage of S-adenosyl-L-methionine (SAM). Is also able to oxidize a serine residue in a synthetic substrate to FGly in vitro, and in a serine variant of a Cys-type sulfatase in vivo, but this activity is not physiological. Converts threonyl peptides to the corresponding ketone product, and also allo-threonyl peptides, but with a significantly reduced efficiency. In Clostridium perfringens (strain ATCC 13124 / DSM 756 / JCM 1290 / NCIMB 6125 / NCTC 8237 / Type A), this protein is Cysteine-type anaerobic sulfatase-maturating enzyme.